The sequence spans 221 residues: MAGEQNIKYFNIKGRMEAIRWLLAVAGVEFEEKFFETKEQLQKLKETVLLFQQVPMVEIDGMKLVQTRAILHYIAEKYNLLGKDMKEHAQIIMYSEGTMDLMELIMIYPFLKGEEKKQRLVEIANKAKGRYFPAFENVLKTHGQNFLVGNQLSMADVQLFEAILMVEEKVPDALSGFPLLQAFKTRISNIPTVKTFLAPGSKRKPVPDAKYVEDIIKIFYF.

The residue at position 1 (Met1) is an N-acetylmethionine. Residue Ala2 is modified to N-acetylalanine; in Glutathione S-transferase, N-terminally processed. The 80-residue stretch at 3–82 folds into the GST N-terminal domain; the sequence is GEQNIKYFNI…YIAEKYNLLG (80 aa). Glutathione-binding positions include Tyr9, Lys45, 53 to 54, and 66 to 67; these read QV and QT. Residues 84–208 form the GST C-terminal domain; the sequence is DMKEHAQIIM…PGSKRKPVPD (125 aa).

This sequence belongs to the GST superfamily. Alpha family. In terms of assembly, homodimer or heterodimer of GSTA1 and GSTA2.

It localises to the cytoplasm. The catalysed reaction is RX + glutathione = an S-substituted glutathione + a halide anion + H(+). It catalyses the reaction prostaglandin A2 + glutathione = prostaglandin A2-S-(R)-glutathione. It carries out the reaction prostaglandin J2 + glutathione = prostaglandin J2-S-(R)-glutathione. The enzyme catalyses (13S)-hydroperoxy-(9Z,11E)-octadecadienoate + 2 glutathione = (13S)-hydroxy-(9Z,11E)-octadecadienoate + glutathione disulfide + H2O. The catalysed reaction is androst-5-ene-3,17-dione = androst-4-ene-3,17-dione. Functionally, glutathione S-transferase that catalyzes the nucleophilic attack of the sulfur atom of glutathione on the electrophilic groups of a wide range of exogenous and endogenous compounds. Involved in the formation of glutathione conjugates of both prostaglandin A2 (PGA2) and prostaglandin J2 (PGJ2). It also catalyzes the isomerization of D5-androstene-3,17-dione (AD) into D4-androstene-3,17-dione and may therefore play an important role in hormone biosynthesis. Through its glutathione-dependent peroxidase activity toward the fatty acid hydroperoxide (13S)-hydroperoxy-(9Z,11E)-octadecadienoate/13-HPODE it is also involved in the metabolism of oxidized linoleic acid. This is Glutathione S-transferase from Antechinus stuartii (Brown marsupial mouse).